A 129-amino-acid polypeptide reads, in one-letter code: UPF0102 protein CT2262 (129 aa).

The protein belongs to the UPF0102 family.

The protein is UPF0102 protein CT2262 of Chlorobaculum tepidum (strain ATCC 49652 / DSM 12025 / NBRC 103806 / TLS) (Chlorobium tepidum).